The chain runs to 331 residues: Probable transaldolase (331 aa).

The Schiff-base intermediate with substrate role is filled by K142.

Belongs to the transaldolase family. Type 1 subfamily. Homodimer.

It localises to the cytoplasm. The catalysed reaction is D-sedoheptulose 7-phosphate + D-glyceraldehyde 3-phosphate = D-erythrose 4-phosphate + beta-D-fructose 6-phosphate. It participates in carbohydrate degradation; pentose phosphate pathway; D-glyceraldehyde 3-phosphate and beta-D-fructose 6-phosphate from D-ribose 5-phosphate and D-xylulose 5-phosphate (non-oxidative stage): step 2/3. In terms of biological role, transaldolase is important for the balance of metabolites in the pentose-phosphate pathway. The protein is Probable transaldolase of Drosophila melanogaster (Fruit fly).